The following is a 424-amino-acid chain: Putative ankyrin repeat protein R858 (424 aa).

4 ANK repeats span residues 115 to 144, 147 to 177, 184 to 215, and 219 to 252; these read HLMC…FTKR, TDHT…SDYF, INDS…SINY, and TGST…DIHE.

The polypeptide is Putative ankyrin repeat protein R858 (Acanthamoeba polyphaga (Amoeba)).